The primary structure comprises 442 residues: ATP-dependent protease ATPase subunit HslU (442 aa).

Residues Ile18 and 60-65 (GVGKTE) each bind ATP. The interval 136–157 (LPKPKNDWESTETDSSSNTRQV) is disordered. Residues Asp255, Glu320, and Arg392 each coordinate ATP.

The protein belongs to the ClpX chaperone family. HslU subfamily. As to quaternary structure, a double ring-shaped homohexamer of HslV is capped on each side by a ring-shaped HslU homohexamer. The assembly of the HslU/HslV complex is dependent on binding of ATP.

The protein resides in the cytoplasm. ATPase subunit of a proteasome-like degradation complex; this subunit has chaperone activity. The binding of ATP and its subsequent hydrolysis by HslU are essential for unfolding of protein substrates subsequently hydrolyzed by HslV. HslU recognizes the N-terminal part of its protein substrates and unfolds these before they are guided to HslV for hydrolysis. The sequence is that of ATP-dependent protease ATPase subunit HslU from Shewanella baltica (strain OS185).